We begin with the raw amino-acid sequence, 71 residues long: MVPPVQVSPLIKLGRYSALFLGVAYGATRYNYLKPRAEEERRIAAEEKKKQDELKRIARELAEAQDDSILK.

K34 is modified (N6-acetyllysine). Residue S68 is modified to Phosphoserine.

This sequence belongs to the ATPase e subunit family. As to quaternary structure, component of the ATP synthase complex composed at least of ATP5F1A/subunit alpha, ATP5F1B/subunit beta, ATP5MC1/subunit c (homooctomer), MT-ATP6/subunit a, MT-ATP8/subunit 8, ATP5ME/subunit e, ATP5MF/subunit f, ATP5MG/subunit g, ATP5MK/subunit k, ATP5MJ/subunit j, ATP5F1C/subunit gamma, ATP5F1D/subunit delta, ATP5F1E/subunit epsilon, ATP5PF/subunit F6, ATP5PB/subunit b, ATP5PD/subunit d, ATP5PO/subunit OSCP. ATP synthase complex consists of a soluble F(1) head domain (subunits alpha(3) and beta(3)) - the catalytic core - and a membrane F(0) domain - the membrane proton channel (subunits c, a, 8, e, f, g, k and j). These two domains are linked by a central stalk (subunits gamma, delta, and epsilon) rotating inside the F1 region and a stationary peripheral stalk (subunits F6, b, d, and OSCP).

Its subcellular location is the mitochondrion. It localises to the mitochondrion inner membrane. Functionally, subunit e, of the mitochondrial membrane ATP synthase complex (F(1)F(0) ATP synthase or Complex V) that produces ATP from ADP in the presence of a proton gradient across the membrane which is generated by electron transport complexes of the respiratory chain. ATP synthase complex consist of a soluble F(1) head domain - the catalytic core - and a membrane F(1) domain - the membrane proton channel. These two domains are linked by a central stalk rotating inside the F(1) region and a stationary peripheral stalk. During catalysis, ATP synthesis in the catalytic domain of F(1) is coupled via a rotary mechanism of the central stalk subunits to proton translocation. In vivo, can only synthesize ATP although its ATP hydrolase activity can be activated artificially in vitro. Part of the complex F(0) domain. The protein is ATP synthase F(0) complex subunit e, mitochondrial of Pongo abelii (Sumatran orangutan).